We begin with the raw amino-acid sequence, 507 residues long: Transmembrane protein 184 homolog DDB_G0276041 (507 aa).

Helical transmembrane passes span 13 to 33 (IVMLSIGSFFALGSIIIAVIL), 50 to 70 (IVRIIMIAPIYAIHSLLSLFF), 88 to 108 (AYVLYCFFKLLICFLGGEEAL), 141 to 161 (LGLVLQYAIIKPTLAIVAAIL), 179 to 199 (LWITVINNISVLIALYFLVMF), 222 to 242 (VVFFLFWQTVVITVLIWFDAL), and 260 to 280 (FLVCIEMFITSIAMGICFSYS). N-linked (GlcNAc...) asparagine glycans are attached at residues Asn-360, Asn-375, Asn-470, Asn-473, Asn-477, and Asn-498. The tract at residues 448–500 (NGASNNNNNNNNNNNNINNNNNNNSNNSNNNSNSQFESIDINSNSVNSNKNQS) is disordered. The span at 451–500 (SNNNNNNNNNNNNINNNNNNNSNNSNNNSNSQFESIDINSNSVNSNKNQS) shows a compositional bias: low complexity.

This sequence belongs to the TMEM184 family.

It is found in the cell membrane. Probable transporter. The polypeptide is Transmembrane protein 184 homolog DDB_G0276041 (tmem184B) (Dictyostelium discoideum (Social amoeba)).